The sequence spans 766 residues: 1,4-alpha-glucan branching enzyme GlgB (766 aa).

Residue aspartate 431 is the Nucleophile of the active site. The Proton donor role is filled by glutamate 484.

Belongs to the glycosyl hydrolase 13 family. GlgB subfamily. In terms of assembly, monomer.

The catalysed reaction is Transfers a segment of a (1-&gt;4)-alpha-D-glucan chain to a primary hydroxy group in a similar glucan chain.. Its pathway is glycan biosynthesis; glycogen biosynthesis. Its function is as follows. Catalyzes the formation of the alpha-1,6-glucosidic linkages in glycogen by scission of a 1,4-alpha-linked oligosaccharide from growing alpha-1,4-glucan chains and the subsequent attachment of the oligosaccharide to the alpha-1,6 position. The polypeptide is 1,4-alpha-glucan branching enzyme GlgB (Thermosynechococcus vestitus (strain NIES-2133 / IAM M-273 / BP-1)).